The primary structure comprises 126 residues: Histone H2B type 1-B (126 aa).

A compositionally biased stretch (low complexity) spans 1–12; the sequence is MPEPSKSAPAPK. Residues 1–36 form a disordered region; it reads MPEPSKSAPAPKKGSKKAISKAQKKDGKKRKRSRKE. P2 is modified (N-acetylproline). ADP-ribosyl glutamic acid is present on E3. N6-(2-hydroxyisobutyryl)lysine; alternate is present on K6. N6-(beta-hydroxybutyryl)lysine; alternate is present on K6. K6 is modified (N6-acetyllysine; alternate). N6-butyryllysine; alternate is present on K6. K6 carries the N6-crotonyllysine; alternate modification. Residue K6 is modified to N6-lactoyllysine; alternate. Residue K6 forms a Glycyl lysine isopeptide (Lys-Gly) (interchain with G-Cter in SUMO2); alternate linkage. Residue S7 is modified to ADP-ribosylserine. K12 bears the N6-(beta-hydroxybutyryl)lysine; alternate mark. 2 positions are modified to N6-acetyllysine; alternate: K12 and K13. An N6-crotonyllysine; alternate mark is found at K12 and K13. K12 carries the N6-lactoyllysine; alternate modification. K13 is modified (N6-(2-hydroxyisobutyryl)lysine; alternate). The residue at position 15 (S15) is a Phosphoserine; by STK4/MST1. 4 positions are modified to N6-acetyllysine; alternate: K16, K17, K21, and K24. N6-crotonyllysine; alternate occurs at positions 16, 17, 21, and 24. 4 positions are modified to N6-lactoyllysine; alternate: K16, K17, K21, and K24. Position 17 is an N6-glutaryllysine; alternate (K17). 2 positions are modified to N6-(2-hydroxyisobutyryl)lysine; alternate: K21 and K24. K21 carries the N6-(beta-hydroxybutyryl)lysine; alternate modification. An N6-butyryllysine; alternate modification is found at K21. K21 participates in a covalent cross-link: Glycyl lysine isopeptide (Lys-Gly) (interchain with G-Cter in SUMO2); alternate. K25 is modified (N6-(2-hydroxyisobutyryl)lysine). At K35 the chain carries N6-(2-hydroxyisobutyryl)lysine; alternate. K35 is modified (N6-(beta-hydroxybutyryl)lysine; alternate). An N6-crotonyllysine; alternate modification is found at K35. Residue K35 is modified to N6-glutaryllysine; alternate. K35 bears the N6-succinyllysine; alternate mark. K35 is covalently cross-linked (Glycyl lysine isopeptide (Lys-Gly) (interchain with G-Cter in ubiquitin); alternate). E36 carries the polyADP-ribosyl glutamic acid modification. Phosphoserine; by AMPK is present on S37. 3 positions are modified to N6-(2-hydroxyisobutyryl)lysine; alternate: K44, K47, and K58. The residue at position 44 (K44) is an N6-lactoyllysine; alternate. N6-glutaryllysine; alternate occurs at positions 44 and 47. The residue at position 47 (K47) is an N6-methyllysine; alternate. At K58 the chain carries N6,N6-dimethyllysine; alternate. Residue R80 is modified to Dimethylated arginine. N6-(2-hydroxyisobutyryl)lysine; alternate is present on K86. Residue K86 is modified to N6-acetyllysine; alternate. K86 is modified (N6-lactoyllysine; alternate). K86 bears the N6,N6,N6-trimethyllysine; alternate mark. R87 and R93 each carry omega-N-methylarginine. K109 carries the N6-(2-hydroxyisobutyryl)lysine; alternate modification. At K109 the chain carries N6-(beta-hydroxybutyryl)lysine; alternate. An N6-lactoyllysine; alternate modification is found at K109. Position 109 is an N6-glutaryllysine; alternate (K109). K109 carries the post-translational modification N6-methyllysine; alternate. A glycan (O-linked (GlcNAc) serine) is linked at S113. Residue T116 is modified to Phosphothreonine. N6-(2-hydroxyisobutyryl)lysine; alternate occurs at positions 117 and 121. The residue at position 117 (K117) is an N6-(beta-hydroxybutyryl)lysine; alternate. K117 and K121 each carry N6-lactoyllysine; alternate. 2 positions are modified to N6-glutaryllysine; alternate: K117 and K121. N6-succinyllysine; alternate occurs at positions 117 and 121. Position 117 is an N6-methylated lysine; alternate (K117). K121 participates in a covalent cross-link: Glycyl lysine isopeptide (Lys-Gly) (interchain with G-Cter in ubiquitin); alternate.

The protein belongs to the histone H2B family. The nucleosome is a histone octamer containing two molecules each of H2A, H2B, H3 and H4 assembled in one H3-H4 heterotetramer and two H2A-H2B heterodimers. The octamer wraps approximately 147 bp of DNA. Monoubiquitination at Lys-35 (H2BK34Ub) by the MSL1/MSL2 dimer is required for histone H3 'Lys-4' (H3K4me) and 'Lys-79' (H3K79me) methylation and transcription activation at specific gene loci, such as HOXA9 and MEIS1 loci. Similarly, monoubiquitination at Lys-121 (H2BK120Ub) by the RNF20/40 complex gives a specific tag for epigenetic transcriptional activation and is also prerequisite for histone H3 'Lys-4' and 'Lys-79' methylation. It also functions cooperatively with the FACT dimer to stimulate elongation by RNA polymerase II. H2BK120Ub also acts as a regulator of mRNA splicing: deubiquitination by USP49 is required for efficient cotranscriptional splicing of a large set of exons. In terms of processing, phosphorylated on Ser-15 (H2BS14ph) by STK4/MST1 during apoptosis; which facilitates apoptotic chromatin condensation. Also phosphorylated on Ser-15 in response to DNA double strand breaks (DSBs), and in correlation with somatic hypermutation and immunoglobulin class-switch recombination. Phosphorylation at Ser-37 (H2BS36ph) by AMPK in response to stress promotes transcription. Post-translationally, glcNAcylation at Ser-113 promotes monoubiquitination of Lys-121. It fluctuates in response to extracellular glucose, and associates with transcribed genes. ADP-ribosylated by PARP1 or PARP2 on Ser-7 (H2BS6ADPr) in response to DNA damage. H2BS6ADPr promotes recruitment of CHD1L. Mono-ADP-ribosylated on Glu-3 (H2BE2ADPr) by PARP3 in response to single-strand breaks. Poly ADP-ribosylation on Glu-36 (H2BE35ADPr) by PARP1 regulates adipogenesis: it inhibits phosphorylation at Ser-37 (H2BS36ph), thereby blocking expression of pro-adipogenetic genes. In terms of processing, hydroxybutyrylation of histones is induced by starvation. Post-translationally, crotonylation (Kcr) is specifically present in male germ cells and marks testis-specific genes in post-meiotic cells, including X-linked genes that escape sex chromosome inactivation in haploid cells. Crotonylation marks active promoters and enhancers and confers resistance to transcriptional repressors. It is also associated with post-meiotically activated genes on autosomes. Lactylated in macrophages by EP300/P300 by using lactoyl-CoA directly derived from endogenous or exogenous lactate, leading to stimulates gene transcription.

The protein localises to the nucleus. Its subcellular location is the chromosome. In terms of biological role, core component of nucleosome. Nucleosomes wrap and compact DNA into chromatin, limiting DNA accessibility to the cellular machineries which require DNA as a template. Histones thereby play a central role in transcription regulation, DNA repair, DNA replication and chromosomal stability. DNA accessibility is regulated via a complex set of post-translational modifications of histones, also called histone code, and nucleosome remodeling. This is Histone H2B type 1-B from Mus musculus (Mouse).